The following is a 93-amino-acid chain: Large ribosomal subunit protein eL42 (93 aa).

Positions 11, 14, 71, and 74 each coordinate Zn(2+). The segment at 11 to 74 (CPYCKKHTSH…IALRLVCDEC (64 aa)) adopts a C4-type zinc-finger fold.

Belongs to the eukaryotic ribosomal protein eL42 family. As to quaternary structure, part of the 50S ribosomal subunit. Requires Zn(2+) as cofactor.

Binds to the 23S rRNA. In Thermoplasma acidophilum (strain ATCC 25905 / DSM 1728 / JCM 9062 / NBRC 15155 / AMRC-C165), this protein is Large ribosomal subunit protein eL42.